The primary structure comprises 307 residues: Aspartate carbamoyltransferase catalytic subunit (307 aa).

Positions 49 and 50 each coordinate carbamoyl phosphate. Lysine 77 lines the L-aspartate pocket. The carbamoyl phosphate site is built by arginine 99, histidine 127, and glutamine 130. Arginine 160 and arginine 211 together coordinate L-aspartate. Carbamoyl phosphate contacts are provided by alanine 250 and proline 251.

It belongs to the aspartate/ornithine carbamoyltransferase superfamily. ATCase family. In terms of assembly, heterododecamer (2C3:3R2) of six catalytic PyrB chains organized as two trimers (C3), and six regulatory PyrI chains organized as three dimers (R2).

It carries out the reaction carbamoyl phosphate + L-aspartate = N-carbamoyl-L-aspartate + phosphate + H(+). Its pathway is pyrimidine metabolism; UMP biosynthesis via de novo pathway; (S)-dihydroorotate from bicarbonate: step 2/3. Its function is as follows. Catalyzes the condensation of carbamoyl phosphate and aspartate to form carbamoyl aspartate and inorganic phosphate, the committed step in the de novo pyrimidine nucleotide biosynthesis pathway. The protein is Aspartate carbamoyltransferase catalytic subunit of Bacillus pumilus (strain SAFR-032).